The sequence spans 404 residues: Cysteine desulfurase IscS (404 aa).

Pyridoxal 5'-phosphate is bound by residues 75–76 (AT), Asn-155, Gln-183, and 203–205 (SAH). At Lys-206 the chain carries N6-(pyridoxal phosphate)lysine. Thr-243 is a pyridoxal 5'-phosphate binding site. The active-site Cysteine persulfide intermediate is Cys-328. [2Fe-2S] cluster is bound at residue Cys-328.

It belongs to the class-V pyridoxal-phosphate-dependent aminotransferase family. NifS/IscS subfamily. As to quaternary structure, homodimer. Forms a heterotetramer with IscU, interacts with other sulfur acceptors. Pyridoxal 5'-phosphate is required as a cofactor.

It is found in the cytoplasm. The catalysed reaction is (sulfur carrier)-H + L-cysteine = (sulfur carrier)-SH + L-alanine. It participates in cofactor biosynthesis; iron-sulfur cluster biosynthesis. Master enzyme that delivers sulfur to a number of partners involved in Fe-S cluster assembly, tRNA modification or cofactor biosynthesis. Catalyzes the removal of elemental sulfur atoms from cysteine to produce alanine. Functions as a sulfur delivery protein for Fe-S cluster synthesis onto IscU, an Fe-S scaffold assembly protein, as well as other S acceptor proteins. This Pseudomonas putida (strain ATCC 700007 / DSM 6899 / JCM 31910 / BCRC 17059 / LMG 24140 / F1) protein is Cysteine desulfurase IscS.